Reading from the N-terminus, the 154-residue chain is Putative pre-16S rRNA nuclease (154 aa).

This sequence belongs to the YqgF nuclease family.

It localises to the cytoplasm. Functionally, could be a nuclease involved in processing of the 5'-end of pre-16S rRNA. This Rickettsia rickettsii (strain Iowa) protein is Putative pre-16S rRNA nuclease.